Reading from the N-terminus, the 192-residue chain is Vascular endothelial growth factor A (192 aa).

A signal peptide spans 1 to 26 (MNFLLSWIHWGLAALLYFHNAKVLQA). Disulfide bonds link Cys52-Cys94, Cys83-Cys128, and Cys87-Cys130. Asn101 carries an N-linked (GlcNAc...) asparagine glycan.

This sequence belongs to the PDGF/VEGF growth factor family. As to quaternary structure, homodimer; disulfide-linked. Also found as heterodimer with PGF Interacts with FLT1/VEGFR1 and KDR/VEGFR2 receptors, heparan sulfate and heparin. Expressed by the venom gland, and probably other tissues.

It is found in the secreted. Growth factor active in angiogenesis, vasculogenesis and endothelial cell growth. Induces endothelial cell proliferation, promotes cell migration, inhibits apoptosis and induces permeabilization of blood vessels. The polypeptide is Vascular endothelial growth factor A (Vipera ammodytes ammodytes (Western sand viper)).